Reading from the N-terminus, the 871-residue chain is CRISPR system Cmr subunit Cmr2 (871 aa).

The not required for target RNA cleavage stretch occupies residues 1–215 (MVNIKEKLFV…THLDLTSALS (215 aa)). Positions 13, 14, and 25 each coordinate Mn(2+). Residues cysteine 448, cysteine 451, cysteine 478, and cysteine 481 each contribute to the Zn(2+) site. The GGDEF domain occupies 592–752 (KYYAILVMDG…GKDTLAIGLL (161 aa)). The Mn(2+) site is built by aspartate 600, glutamate 656, aspartate 673, aspartate 674, glutamate 694, and glutamate 700.

Belongs to the CRISPR system Cmr2 family. As to quaternary structure, part of the type III-B Cmr ribonucleoprotein (RNP) complex, an elongated RNP with Cmr2 and Cmr3 as the base, with Cmr4 and Cmr5 forming a helical core along the mature crRNA (39 or 45 nt in length), while the complex is capped by Cmr6 and Cmr1. The 5' end of the crRNA is bound to Cmr2 and Cmr3, while Cmr6 and a Cmr1 subunit (Cmr1-1 or Cmr1-2) cap the 3' end of the crRNA. The target RNA lies antiparallel to the crRNA, with its 5' end near Cmr1 and Cmr6 and its 3' end near Cmr2 and Cmr3; major target cleavage occurs nears the junction of Cmr1/Cmr6 and Cmr4/Cmr, with minor cleavage occurring at 6 nt intervals which coincide with the proposed spacing of Cmr4 subunits. Forms a 1:1 complex with Cmr3. The Cmr2-Cmr3 complex non-specifically binds ss-target RNA and crRNA. Interacts with Cmr3, Cmr4 and Cmr5. Ca(2+) serves as cofactor. Mn(2+) is required as a cofactor. Requires Zn(2+) as cofactor.

Its subcellular location is the cytoplasm. Its function is as follows. CRISPR (clustered regularly interspaced short palindromic repeat), is an adaptive immune system that provides protection against mobile genetic elements (viruses, transposable elements and conjugative plasmids). CRISPR clusters contain sequences complementary to antecedent mobile elements and target invading nucleic acids. CRISPR clusters are transcribed and processed into CRISPR RNA (crRNA), formerly called psiRNA (prokaryotic silencing) in this organism. Part of the Cmr ribonucleoprotein complex which has divalent cation-dependent endoribonuclease activity specific for ssRNA complementary to the crRNA (target RNA), generating 5' hydroxy- and 3' phosphate or 2'-3' cyclic phosphate termini. Cmr4 is probably the subunit that cleaves target RNA. Cmr complex does not cleave ssDNA complementary to the crRNA. Cleavage of target RNA is guided by the crRNA; substrate cleavage occurs a fixed distance (14 nt) from the 3' end of the crRNA. In vitro reconstitution shows Cmr1-2 and Cmr5 are not absolutely necessary for target cleavage. The polypeptide is CRISPR system Cmr subunit Cmr2 (Pyrococcus furiosus (strain ATCC 43587 / DSM 3638 / JCM 8422 / Vc1)).